Consider the following 198-residue polypeptide: Recombination protein RecR (198 aa).

The C4-type zinc-finger motif lies at 57 to 72; the sequence is CAMCNTFTEHEVCETC. The Toprim domain occupies 80–175; that stretch reads ALLCVVETPG…KVSRLARGVP (96 aa).

This sequence belongs to the RecR family.

In terms of biological role, may play a role in DNA repair. It seems to be involved in an RecBC-independent recombinational process of DNA repair. It may act with RecF and RecO. This is Recombination protein RecR from Janthinobacterium sp. (strain Marseille) (Minibacterium massiliensis).